Here is a 403-residue protein sequence, read N- to C-terminus: Argininosuccinate synthase (403 aa).

Residues 12-20 and A39 each bind ATP; that span reads AYSGGLDTS. An L-citrulline-binding site is contributed by Y91. An ATP-binding site is contributed by G121. L-aspartate contacts are provided by T123, N127, and D128. Residue N127 participates in L-citrulline binding. Residues R131, S180, S189, E265, and Y277 each contribute to the L-citrulline site.

It belongs to the argininosuccinate synthase family. Type 1 subfamily. In terms of assembly, homotetramer.

Its subcellular location is the cytoplasm. It catalyses the reaction L-citrulline + L-aspartate + ATP = 2-(N(omega)-L-arginino)succinate + AMP + diphosphate + H(+). Its pathway is amino-acid biosynthesis; L-arginine biosynthesis; L-arginine from L-ornithine and carbamoyl phosphate: step 2/3. This is Argininosuccinate synthase from Buchnera aphidicola subsp. Acyrthosiphon pisum (strain 5A).